The following is a 295-amino-acid chain: Mitochondrial dicarboxylate transporter (295 aa).

3 Solcar repeats span residues 4-88 (KQVK…LKEH), 96-188 (TNMW…FKNF), and 198-286 (KKNS…LKKY). 6 consecutive transmembrane segments (helical) span residues 8–24 (YPWW…VMNT), 63–82 (GLSA…FGMY), 98–122 (MWYL…ADLI), 163–182 (GWKP…VVTY), 204–224 (LTSS…ADVI), and 262–280 (WVPS…FFAM).

It belongs to the mitochondrial carrier (TC 2.A.29) family. Homodimer.

The protein resides in the mitochondrion inner membrane. In terms of biological role, mitochondrial dicarboxylic transporter catalyzing the exchange of dicarboxylic acids like malate and succinate for inorganic phosphate. Required for growth on ethanol and acetate. The chain is Mitochondrial dicarboxylate transporter (DIC1) from Candida glabrata (strain ATCC 2001 / BCRC 20586 / JCM 3761 / NBRC 0622 / NRRL Y-65 / CBS 138) (Yeast).